The primary structure comprises 1816 residues: Kinesin-like protein KIF1B (1816 aa).

Residue serine 2 is modified to N-acetylserine. The Kinesin motor domain maps to 5–354; it reads SVKVAVRVRP…LRYADRAKQI (350 aa). An ATP-binding site is contributed by 97 to 104; the sequence is GQTGAGKS. An interaction with KIFBP region spans residues 270 to 350; sequence NINKSLTTLG…TLSTLRYADR (81 aa). Coiled-coil stretches lie at residues 365–386 and 470–502; these read NAKL…LRAQ and GEEA…EAIR. The FHA domain occupies 556–612; sequence TRVGQADAERRQDIVLSGAHIKEEHCLFRSERSNTGEVIVTLEPCERSETYVNGKRV. A phosphothreonine mark is found at threonine 647 and threonine 652. Coiled-coil stretches lie at residues 668–737 and 841–869; these read EKQG…EEEV and SLDK…AQDD. Residues serine 1054, serine 1057, serine 1416, serine 1454, and serine 1487 each carry the phosphoserine modification. The disordered stretch occupies residues 1522–1571; that stretch reads VPKSLSDSLSPSLSSGTLSTSTSISSQISTTTFESAITPSESSGYDSADV. Residues 1525–1553 show a composition bias toward low complexity; that stretch reads SLSDSLSPSLSSGTLSTSTSISSQISTTT. A compositionally biased stretch (polar residues) spans 1554-1566; it reads FESAITPSESSGY. Phosphoserine occurs at positions 1573, 1603, 1610, and 1613. Low complexity predominate over residues 1620–1637; sequence SVSSFSSSTLTPSSTCPS. The disordered stretch occupies residues 1620-1659; sequence SVSSFSSSTLTPSSTCPSLVDSRSSSMDQKTPEANSRASS. Over residues 1640-1659 the composition is skewed to polar residues; that stretch reads DSRSSSMDQKTPEANSRASS. Positions 1702–1799 constitute a PH domain; it reads VSKKGYLHFK…WLYAFNPLLA (98 aa).

It belongs to the TRAFAC class myosin-kinesin ATPase superfamily. Kinesin family. Unc-104 subfamily. As to quaternary structure, monomer. Interacts with KIFBP; positively regulates KIF1B microtubule motor activity. Interacts (via C-terminus end of the kinesin-motor domain) with CHP1; the interaction occurs in a calcium-dependent manner. In terms of assembly, interacts with MADD (via death domain); links this isoform to Rab3-carrying vesicles in anterograde synaptic vesicle transport. In terms of tissue distribution, expressed in the brain (at protein level).

The protein resides in the cytoplasm. It is found in the cytoskeleton. The protein localises to the cytoplasmic vesicle. Its subcellular location is the secretory vesicle. It localises to the synaptic vesicle membrane. The protein resides in the mitochondrion. The enzyme catalyses ATP + H2O + a kinesin associated with a microtubule at position (n) = ADP + phosphate a kinesin associated with a microtubule at position (n+1, toward the plus end).. Has a plus-end-directed microtubule motor activity and functions as a motor for transport of vesicles and organelles along microtubules. Functionally, has a plus-end-directed microtubule motor activity and functions as a motor for anterograde synaptic vesicle transport along axonal microtubules from the cell body to the presynapse in neuronal cells. Functions as a downstream effector in a developmental apoptotic pathway that is activated when nerve growth factor (NGF) becomes limiting for neuronal progenitor cells. Its function is as follows. Has a plus-end-directed microtubule motor activity and functions as a motor for anterograde transport of mitochondria. The sequence is that of Kinesin-like protein KIF1B from Mus musculus (Mouse).